We begin with the raw amino-acid sequence, 159 residues long: Ribosome maturation factor RimP (159 aa).

This sequence belongs to the RimP family.

It localises to the cytoplasm. Functionally, required for maturation of 30S ribosomal subunits. The polypeptide is Ribosome maturation factor RimP (Lacticaseibacillus casei (strain BL23) (Lactobacillus casei)).